The chain runs to 244 residues: Ribosomal RNA large subunit methyltransferase E (244 aa).

A disordered region spans residues 1 to 23; sequence MATGGKKSAGRTTGSGPAGGSRN. The S-adenosyl-L-methionine site is built by Gly91, Trp93, Asp116, Asp132, and Asp156. Lys196 (proton acceptor) is an active-site residue.

This sequence belongs to the class I-like SAM-binding methyltransferase superfamily. RNA methyltransferase RlmE family.

The protein resides in the cytoplasm. It catalyses the reaction uridine(2552) in 23S rRNA + S-adenosyl-L-methionine = 2'-O-methyluridine(2552) in 23S rRNA + S-adenosyl-L-homocysteine + H(+). Functionally, specifically methylates the uridine in position 2552 of 23S rRNA at the 2'-O position of the ribose in the fully assembled 50S ribosomal subunit. In Paramagnetospirillum magneticum (strain ATCC 700264 / AMB-1) (Magnetospirillum magneticum), this protein is Ribosomal RNA large subunit methyltransferase E.